The chain runs to 67 residues: Large ribosomal subunit protein uL29 (67 aa).

Belongs to the universal ribosomal protein uL29 family.

The sequence is that of Large ribosomal subunit protein uL29 from Rhizorhabdus wittichii (strain DSM 6014 / CCUG 31198 / JCM 15750 / NBRC 105917 / EY 4224 / RW1) (Sphingomonas wittichii).